Consider the following 1578-residue polypeptide: Neurexin-3 (1578 aa).

The first 27 residues, 1–27 (MSFTLHSVFFTLKVSSFLGSLVGLCLG), serve as a signal peptide directing secretion. In terms of domain architecture, Laminin G-like 1 spans 28 to 202 (LEFMGLPNQW…SVQLEAEGPC (175 aa)). Residues 28-1503 (LEFMGLPNQW…EVIRESNSTT (1476 aa)) are Extracellular-facing. N-linked (GlcNAc...) asparagine glycans are attached at residues asparagine 58 and asparagine 105. Positions 198–235 (AEGPCGERPCENGGICFLLDGHPTCDCSTTGYGGTLCS) constitute an EGF-like 1 domain. 3 cysteine pairs are disulfide-bonded: cysteine 202–cysteine 213, cysteine 207–cysteine 222, and cysteine 224–cysteine 234. Laminin G-like domains are found at residues 260 to 444 (ENVA…VFKC) and 451 to 643 (DPIN…KSSC). Ca(2+) contacts are provided by aspartate 308, leucine 325, and methionine 378. 5 disulfides stabilise this stretch: cysteine 408/cysteine 444, cysteine 614/cysteine 643, cysteine 651/cysteine 662, cysteine 656/cysteine 671, and cysteine 673/cysteine 683. The region spanning 647-684 (SAKQCDSYPCKNNAVCKDGWNRFICDCTGTGYWGRTCE) is the EGF-like 2 domain. Laminin G-like domains lie at 689 to 861 (ILSY…IDYC) and 875 to 1050 (DPVT…DRGC). Residues aspartate 736 and leucine 753 each contribute to the Ca(2+) site. N-linked (GlcNAc...) asparagine glycosylation occurs at asparagine 761. Arginine 811 lines the Ca(2+) pocket. 4 cysteine pairs are disulfide-bonded: cysteine 1022/cysteine 1050, cysteine 1057/cysteine 1068, cysteine 1062/cysteine 1077, and cysteine 1079/cysteine 1089. An EGF-like 3 domain is found at 1053–1090 (PSTTCQEDSCANQGVCMQQWEGFTCDCSMTSYSGNQCN). One can recognise a Laminin G-like 6 domain in the interval 1094 to 1294 (ATYIFGKSGG…NPNIKINGSV (201 aa)). Residues aspartate 1146 and isoleucine 1163 each contribute to the Ca(2+) site. Asparagine 1193 carries N-linked (GlcNAc...) asparagine glycosylation. The Ca(2+) site is built by isoleucine 1245 and asparagine 1247. N-linked (GlcNAc...) asparagine glycosylation is found at asparagine 1291 and asparagine 1335. The disordered stretch occupies residues 1328–1352 (ATTTTRKNRSTASIQPTSDDLVSSA). The span at 1337–1352 (STASIQPTSDDLVSSA) shows a compositional bias: polar residues. O-linked (Xyl...) (heparan sulfate) serine glycosylation occurs at serine 1351. Asparagine 1500 carries N-linked (GlcNAc...) asparagine glycosylation. A helical membrane pass occupies residues 1504-1524 (GMVVGIVAAAALCILILLYAM). The Cytoplasmic segment spans residues 1525 to 1578 (YKYRNRDEGSYQVDETRNYISNSAQSNGTLMKEKQASSKSGHKKQKNKDKEYYV). The segment at 1546–1578 (NSAQSNGTLMKEKQASSKSGHKKQKNKDKEYYV) is disordered.

It belongs to the neurexin family. The laminin G-like domain 2 binds to NXPH1. Isoform 8/alpha-4B binds to alpha-dystroglycan. The cytoplasmic C-terminal region binds to CASK. Specific isoforms bind neuroligins NLGN1, NLGN2 and NLGN3. Interacts with CLSTN3. In terms of processing, O-glycosylated; contains heparan sulfate. Heparan sulfate attachment is required for synapse development by mediating interactions with neuroligins. As to expression, brain.

It localises to the presynaptic cell membrane. In terms of biological role, neuronal cell surface protein that may be involved in cell recognition and cell adhesion. May mediate intracellular signaling. The protein is Neurexin-3 (Nrxn3) of Rattus norvegicus (Rat).